A 227-amino-acid polypeptide reads, in one-letter code: MKRADFCIIGLGRFGMQVAQSLKENNFNLLLIDLDDKKTDTASQQFDYVICCDASNLTALEELQIDEFAGVIVGVTNIEASIMICANLRELGQKNIIAKAKNEVHKRVLSTMGIREALIPEKIVGKNLVIRLIHGLENEIINLGNEIIFIRSAVNNKAFFNKRLEEINFRQNTDANIISIMRSNKTVVFPLGPNTEIQPGDIITAVCQQKSLNKYLNYINPKTKNKN.

In terms of domain architecture, RCK N-terminal spans 3 to 119; the sequence is RADFCIIGLG…STMGIREALI (117 aa). The region spanning 134 to 221 is the RCK C-terminal domain; it reads HGLENEIINL…LNKYLNYINP (88 aa).

This is an uncharacterized protein from Mycoplasma genitalium (strain ATCC 33530 / DSM 19775 / NCTC 10195 / G37) (Mycoplasmoides genitalium).